The following is a 348-amino-acid chain: GMP reductase (348 aa).

Alanine 108–alanine 131 contributes to the NADP(+) binding site. Positions 181 and 183 each coordinate K(+). The active-site Thioimidate intermediate is cysteine 186. Isoleucine 216–valine 239 contacts NADP(+).

Belongs to the IMPDH/GMPR family. GuaC type 1 subfamily. As to quaternary structure, homotetramer.

The catalysed reaction is IMP + NH4(+) + NADP(+) = GMP + NADPH + 2 H(+). Functionally, catalyzes the irreversible NADPH-dependent deamination of GMP to IMP. It functions in the conversion of nucleobase, nucleoside and nucleotide derivatives of G to A nucleotides, and in maintaining the intracellular balance of A and G nucleotides. The polypeptide is GMP reductase (Vibrio parahaemolyticus serotype O3:K6 (strain RIMD 2210633)).